Reading from the N-terminus, the 399-residue chain is Tryptophan synthase beta chain (399 aa).

N6-(pyridoxal phosphate)lysine is present on K92.

This sequence belongs to the TrpB family. Tetramer of two alpha and two beta chains. Pyridoxal 5'-phosphate serves as cofactor.

The catalysed reaction is (1S,2R)-1-C-(indol-3-yl)glycerol 3-phosphate + L-serine = D-glyceraldehyde 3-phosphate + L-tryptophan + H2O. The protein operates within amino-acid biosynthesis; L-tryptophan biosynthesis; L-tryptophan from chorismate: step 5/5. The beta subunit is responsible for the synthesis of L-tryptophan from indole and L-serine. This Thiobacillus denitrificans (strain ATCC 25259 / T1) protein is Tryptophan synthase beta chain.